Reading from the N-terminus, the 51-residue chain is RICTNCCAGYKGCNYYSANGAFICEGESDPKNPNVCPRNCDTNIAYSKCLR.

Disulfide bonds link C3-C40, C6-C24, C7-C36, and C13-C49.

The protein belongs to the protease inhibitor I20 (potato type II proteinase inhibitor) family.

The protein resides in the secreted. The polypeptide is Proteinase inhibitor PTI (Solanum tuberosum (Potato)).